Consider the following 370-residue polypeptide: S-adenosylmethionine decarboxylase proenzyme (370 aa).

Residue F28 participates in substrate binding. Catalysis depends on residues E29 and E32. Residue E85 coordinates substrate. S86 (schiff-base intermediate with substrate; via pyruvic acid) is an active-site residue. Pyruvic acid (Ser); by autocatalysis is present on S86. The active-site Proton donor; for catalytic activity is the C100. Catalysis depends on proton acceptor; for processing activity residues S249 and H262. E266 contacts substrate.

Belongs to the eukaryotic AdoMetDC family. In terms of assembly, forms a heterodimer with catalytically inactive AdoMetDC prozyme; heterodimerization is required to activate AdoMetDC. Requires pyruvate as cofactor. In terms of processing, is synthesized initially as an inactive proenzyme. Formation of the active enzyme involves a self-maturation process in which the active site pyruvoyl group is generated from an internal serine residue via an autocatalytic post-translational modification. Two non-identical subunits are generated from the proenzyme in this reaction, and the pyruvate is formed at the N-terminus of the alpha chain, which is derived from the carboxyl end of the proenzyme. The post-translation cleavage follows an unusual pathway, termed non-hydrolytic serinolysis, in which the side chain hydroxyl group of the serine supplies its oxygen atom to form the C-terminus of the beta chain, while the remainder of the serine residue undergoes an oxidative deamination to produce ammonia and the pyruvoyl group blocking the N-terminus of the alpha chain.

It carries out the reaction S-adenosyl-L-methionine + H(+) = S-adenosyl 3-(methylsulfanyl)propylamine + CO2. Its pathway is amine and polyamine biosynthesis; S-adenosylmethioninamine biosynthesis; S-adenosylmethioninamine from S-adenosyl-L-methionine: step 1/1. With respect to regulation, allosterically activated by AdoMetDC prozyme. Activated by putrescine and to a lesser extent by spermidine, norspermidine and spermine. Inhibited by 5'-([(Z)-4-amino-2-butenyl]methylamino)-5'-deoxyadenosine (MDL 73811). In association with the catalytically inactive AdoMetDC prozyme, catalyzes the decarboxylation of S-adenosyl-L-methionine which is essential for the biosynthesis of the polyamine spermidine. Required for growth and survival during the bloodstream life cycle stage. This is S-adenosylmethionine decarboxylase proenzyme from Trypanosoma brucei brucei.